The following is an 83-amino-acid chain: UPF0512 protein G (83 aa).

It belongs to the UPF0512 family.

The chain is UPF0512 protein G from Dictyostelium discoideum (Social amoeba).